The primary structure comprises 354 residues: Soluble interferon alpha/beta receptor OPG204 (354 aa).

The first 22 residues, 1–22 (MMKMTMKMMVHIYFVSLLLLLF), serve as a signal peptide directing secretion. 2 Ig-like C2-type domains span residues 68 to 150 (IGEP…RSHV) and 158 to 240 (PEIY…IVVS). Cystine bridges form between C76–C132 and C175–C224. 5 N-linked (GlcNAc...) asparagine; by host glycosylation sites follow: N120, N124, N185, N272, and N324. Residues 249–348 (PSQDHRFKLI…HNYYFEKTLT (100 aa)) enclose the Ig-like V-type domain. C275 and C336 are joined by a disulfide.

The protein belongs to the interleukin-1 receptor family. In terms of assembly, interacts with host IFNA1.

The protein localises to the secreted. In terms of biological role, counteracts the antiviral effects of host IFN-alpha/beta and key IFN-inducible proteins involved in viral RNA degradation suxh as host OAS1. Acts as a soluble IFN-alpha receptor and thus inhibits the interaction between host IFN-alpha and its receptor. This chain is Soluble interferon alpha/beta receptor OPG204 (OPG204), found in Homo sapiens (Human).